We begin with the raw amino-acid sequence, 324 residues long: Glyoxylate/hydroxypyruvate reductase B (324 aa).

Active-site residues include arginine 237 and glutamate 266. The Proton donor role is filled by histidine 285.

The protein belongs to the D-isomer specific 2-hydroxyacid dehydrogenase family. GhrB subfamily. As to quaternary structure, homodimer.

The protein resides in the cytoplasm. The enzyme catalyses glycolate + NADP(+) = glyoxylate + NADPH + H(+). It catalyses the reaction (R)-glycerate + NAD(+) = 3-hydroxypyruvate + NADH + H(+). The catalysed reaction is (R)-glycerate + NADP(+) = 3-hydroxypyruvate + NADPH + H(+). In terms of biological role, catalyzes the NADPH-dependent reduction of glyoxylate and hydroxypyruvate into glycolate and glycerate, respectively. The polypeptide is Glyoxylate/hydroxypyruvate reductase B (Escherichia coli (strain SMS-3-5 / SECEC)).